A 692-amino-acid polypeptide reads, in one-letter code: Potassium-transporting ATPase ATP-binding subunit (692 aa).

4 helical membrane-spanning segments follow: residues 50 to 70 (PIMF…FLPS), 74 to 94 (SIPG…VLFA), 240 to 260 (LTLI…YLGF), and 266 to 286 (VLVA…LSAI). Asp319 acts as the 4-aspartylphosphate intermediate in catalysis. Residues Asp356, Glu360, 388–395 (FKAETRMS), and Lys407 each bind ATP. Positions 530 and 534 each coordinate Mg(2+). A run of 3 helical transmembrane segments spans residues 600–620 (FAII…LNIM), 628–648 (AILS…PLAM), and 672–692 (GGVI…GLFI).

This sequence belongs to the cation transport ATPase (P-type) (TC 3.A.3) family. Type IA subfamily. In terms of assembly, the system is composed of three essential subunits: KdpA, KdpB and KdpC.

Its subcellular location is the cell membrane. The catalysed reaction is K(+)(out) + ATP + H2O = K(+)(in) + ADP + phosphate + H(+). Part of the high-affinity ATP-driven potassium transport (or Kdp) system, which catalyzes the hydrolysis of ATP coupled with the electrogenic transport of potassium into the cytoplasm. This subunit is responsible for energy coupling to the transport system and for the release of the potassium ions to the cytoplasm. This chain is Potassium-transporting ATPase ATP-binding subunit, found in Bacillus thuringiensis (strain Al Hakam).